Reading from the N-terminus, the 166-residue chain is Phospholipase A2 inhibitor clone 04 (166 aa).

Positions 1–19 (MRLILLSSLLLLGIFLANG) are cleaved as a signal peptide. In terms of domain architecture, C-type lectin spans 46-161 (LKDAFLTVHR…CDDNRLVVCE (116 aa)). Disulfide bonds link Cys83-Cys160 and Cys138-Cys152. Asn122 carries N-linked (GlcNAc...) asparagine glycosylation.

It belongs to the alpha-type phospholipase A2 inhibitor family. As to quaternary structure, homotrimer; non-covalently linked. As to expression, expressed by the liver.

The protein localises to the secreted. Its function is as follows. This phospholipase A2 inhibitor binds directly phospholipase A2 in the presence or absence of calcium. The protein is Phospholipase A2 inhibitor clone 04 of Bothrops moojeni (Lance-headed viper).